The chain runs to 650 residues: MAEGTAEAPLENGGGGDSGAGALERGVAPIKRQYLTTKEQFHQFLEAKGQEKTCRETEVGDPAGNELAEPEAKRIRLEDGQTADGQTEEAAEPGEQLQTQKRARGQNKGRPHVKPTNYDKNRLCPSLIQESAAKCFFGDRCRFLHDVGRYLETKPADLGPRCVLFETFGRCPYGVTCRFAGAHLRPEGQNLVQEELAARGTQPPSIRNGLDKALQQQLRKREVRFERAEQALRRFSQGPTPAAAVPEGTAAEGAPRQENCGAQQVPAGPGTSTPPSSPVRTCGPLTDEDVVRLRPCEKKRLDIRGKLYLAPLTTCGNLPFRRICKRFGADVTCGEMAVCTNLLQGQMSEWALLKRHQCEDIFGVQLEGAFPDTMTKCAELLSRTVEVDFVDINVGCPIDLVYKKGGGCALMNRSTKFQQIVRGMNQVLDVPLTVKIRTGVQERVNLAHRLLPELRDWGVALVTLHGRSREQRYTKLADWQYIEECVQAASPMPLFGNGDILSFEDANRAMQTGVTGIMIARGALLKPWLFTEIKEQRHWDISSSERLDILRDFTNYGLEHWGSDTQGVEKTRRFLLEWLSFLCRYVPVGLLERLPQRINERPPYYLGRDYLETLMASQKAADWIRISEMLLGPVPPSFAFLPKHKANAYK.

Disordered stretches follow at residues 1-24 (MAEG…GALE) and 46-120 (EAKG…NYDK). Ala2 bears the N-acetylalanine mark. Basic and acidic residues-rich tracts occupy residues 48–58 (KGQEKTCRETE) and 70–79 (PEAKRIRLED). The span at 101–113 (KRARGQNKGRPHV) shows a compositional bias: basic residues. 2 C3H1-type zinc fingers span residues 118–148 (YDKN…HDVG) and 156–186 (ADLG…HLRP). A disordered region spans residues 235 to 284 (FSQGPTPAAAVPEGTAAEGAPRQENCGAQQVPAGPGTSTPPSSPVRTCGP). Ser236 bears the Phosphoserine mark. A Phosphothreonine modification is found at Thr273. Residues Ser276 and Ser277 each carry the phosphoserine modification. Residues 311–313 (PLT) and Gln365 each bind FMN. Cys396 acts as the Proton donor in catalysis. Lys416 is covalently cross-linked (Glycyl lysine isopeptide (Lys-Gly) (interchain with G-Cter in SUMO2)). FMN is bound by residues Lys435, His465, 497–499 (NGD), and 520–521 (AR).

The protein belongs to the Dus family. Dus3 subfamily. FMN serves as cofactor.

It carries out the reaction 5,6-dihydrouridine(47) in tRNA + NAD(+) = uridine(47) in tRNA + NADH + H(+). The enzyme catalyses 5,6-dihydrouridine(47) in tRNA + NADP(+) = uridine(47) in tRNA + NADPH + H(+). The catalysed reaction is a 5,6-dihydrouridine in mRNA + NAD(+) = a uridine in mRNA + NADH + H(+). It catalyses the reaction a 5,6-dihydrouridine in mRNA + NADP(+) = a uridine in mRNA + NADPH + H(+). Functionally, catalyzes the synthesis of dihydrouridine, a modified base, in various RNAs, such as tRNAs, mRNAs and some long non-coding RNAs (lncRNAs). Mainly modifies the uridine in position 47 (U47) in the D-loop of most cytoplasmic tRNAs. Also able to mediate the formation of dihydrouridine in some mRNAs, thereby regulating their translation. This Homo sapiens (Human) protein is tRNA-dihydrouridine(47) synthase [NAD(P)(+)]-like.